The chain runs to 446 residues: Chromosomal replication initiator protein DnaA (446 aa).

Positions 1–92 (MENISDLWNS…SQAEEEIDLP (92 aa)) are domain I, interacts with DnaA modulators. A domain II region spans residues 93 to 109 (PAKPNAAQDDSNHLPQS). Residues 110 to 326 (MLNPKYTFDT…GALIRVVAYS (217 aa)) form a domain III, AAA+ region region. ATP contacts are provided by Gly-154, Gly-156, Lys-157, and Thr-158. The segment at 327 to 446 (SLINKDINAD…QVEEINDILK (120 aa)) is domain IV, binds dsDNA.

The protein belongs to the DnaA family. As to quaternary structure, oligomerizes as a right-handed, spiral filament on DNA at oriC.

Its subcellular location is the cytoplasm. Functionally, plays an essential role in the initiation and regulation of chromosomal replication. ATP-DnaA binds to the origin of replication (oriC) to initiate formation of the DNA replication initiation complex once per cell cycle. Binds the DnaA box (a 9 base pair repeat at the origin) and separates the double-stranded (ds)DNA. Forms a right-handed helical filament on oriC DNA; dsDNA binds to the exterior of the filament while single-stranded (ss)DNA is stabiized in the filament's interior. The ATP-DnaA-oriC complex binds and stabilizes one strand of the AT-rich DNA unwinding element (DUE), permitting loading of DNA polymerase. After initiation quickly degrades to an ADP-DnaA complex that is not apt for DNA replication. Binds acidic phospholipids. The chain is Chromosomal replication initiator protein DnaA from Bacillus anthracis (strain A0248).